We begin with the raw amino-acid sequence, 64 residues long: Large ribosomal subunit protein bL35 (64 aa).

The protein belongs to the bacterial ribosomal protein bL35 family.

This Ectopseudomonas mendocina (strain ymp) (Pseudomonas mendocina) protein is Large ribosomal subunit protein bL35.